A 422-amino-acid chain; its full sequence is Serine--tRNA ligase (422 aa).

229–231 (TAE) is a binding site for L-serine. Residue 260–262 (RKE) participates in ATP binding. Residue glutamate 283 coordinates L-serine. Position 347-350 (347-350 (EISS)) interacts with ATP. L-serine is bound at residue serine 383.

The protein belongs to the class-II aminoacyl-tRNA synthetase family. Type-1 seryl-tRNA synthetase subfamily. As to quaternary structure, homodimer. The tRNA molecule binds across the dimer.

It is found in the cytoplasm. The enzyme catalyses tRNA(Ser) + L-serine + ATP = L-seryl-tRNA(Ser) + AMP + diphosphate + H(+). The catalysed reaction is tRNA(Sec) + L-serine + ATP = L-seryl-tRNA(Sec) + AMP + diphosphate + H(+). It functions in the pathway aminoacyl-tRNA biosynthesis; selenocysteinyl-tRNA(Sec) biosynthesis; L-seryl-tRNA(Sec) from L-serine and tRNA(Sec): step 1/1. In terms of biological role, catalyzes the attachment of serine to tRNA(Ser). Is also able to aminoacylate tRNA(Sec) with serine, to form the misacylated tRNA L-seryl-tRNA(Sec), which will be further converted into selenocysteinyl-tRNA(Sec). This is Serine--tRNA ligase from Geotalea uraniireducens (strain Rf4) (Geobacter uraniireducens).